Here is a 159-residue protein sequence, read N- to C-terminus: Putative viral CXC chemokine 2 (159 aa).

Intrachain disulfides connect cysteine 50–cysteine 77 and cysteine 52–cysteine 93.

This sequence belongs to the intercrine alpha (chemokine CxC) family.

The protein is Putative viral CXC chemokine 2 (UL147) of Human cytomegalovirus (strain Towne) (HHV-5).